Here is a 123-residue protein sequence, read N- to C-terminus: Insulin-like peptide-1 (123 aa).

A signal peptide spans 1 to 24; it reads MTTSSYFLLVALGLLLYVCQSSFG. Cystine bridges form between cysteine 29/cysteine 106, cysteine 41/cysteine 109, cysteine 53/cysteine 122, and cysteine 108/cysteine 113. Proline 34 bears the 4-hydroxyproline; partial mark. The propeptide at 59-102 is c peptide; that stretch reads EQGGANNARAYTGRTSSLMKRRGFLSLLKKRGKRDEGSLQRSGR. A 4-carboxyglutamate modification is found at glutamate 107. Position 117 is a 4-carboxyglutamate; partial (glutamate 117).

The protein belongs to the insulin family. In terms of assembly, heterodimer of A and B chains; disulfide-linked. As to expression, expressed by the venom duct.

It localises to the secreted. This venom insulin facilitates prey capture by rapidly inducing hypoglycemic shock. Intraperitoneal injection of this peptide into zebrafish lowers blood glucose with the same potency than human insulin. In vivo, when applied to water, this peptide reduces overall locomotor activity of zebrafish larvae, observed as a significant decrease in the percentage of time spent swimming and movement frequency. This chain is Insulin-like peptide-1, found in Conus victoriae (Queen Victoria cone).